We begin with the raw amino-acid sequence, 232 residues long: Zinc-finger homeodomain protein 5 (232 aa).

Residues 1–11 (MELSEHEEDAG) are compositionally biased toward acidic residues. The disordered stretch occupies residues 1 to 25 (MELSEHEEDAGDVGGGCSSPPTPPH). A ZF-HD dimerization-type; degenerate zinc finger spans residues 40–86 (YHECLRNHAAASGGHVVDGCGEFMPASTEEPLACAACGCHRSFHRRD). The interval 126 to 170 (GLPFPGYGTPSGGTGTTTASSSDERLRPSPVQPRRRSRTTFTREQ) is disordered. The segment at residues 159–222 (RRRSRTTFTR…NNKHSFKQKQ (64 aa)) is a DNA-binding region (homeobox).

In terms of assembly, homo- and heterodimer with other ZFHD proteins.

It localises to the nucleus. Functionally, putative transcription factor. This Oryza sativa subsp. japonica (Rice) protein is Zinc-finger homeodomain protein 5 (ZHD5).